Consider the following 184-residue polypeptide: Probable chemoreceptor glutamine deamidase CheD (184 aa).

The protein belongs to the CheD family.

The enzyme catalyses L-glutaminyl-[protein] + H2O = L-glutamyl-[protein] + NH4(+). Functionally, probably deamidates glutamine residues to glutamate on methyl-accepting chemotaxis receptors (MCPs), playing an important role in chemotaxis. This chain is Probable chemoreceptor glutamine deamidase CheD, found in Rhizobium johnstonii (strain DSM 114642 / LMG 32736 / 3841) (Rhizobium leguminosarum bv. viciae).